Consider the following 215-residue polypeptide: Dual specificity phosphatase 29 (215 aa).

Residues 53-201 form the Tyrosine-protein phosphatase domain; the sequence is HVNEVWPRLH…LRELDKQLVK (149 aa). Position 145–152 (145–152) interacts with substrate; that stretch reads HCAMGRSR. Catalysis depends on cysteine 146, which acts as the Phosphocysteine intermediate.

The protein belongs to the protein-tyrosine phosphatase family. Non-receptor class dual specificity subfamily. As to quaternary structure, homodimer. Interacts with PRKAA2. In terms of tissue distribution, skeletal muscle, liver and adipose tissue.

It localises to the cytoplasm. Its subcellular location is the nucleus. It catalyses the reaction O-phospho-L-tyrosyl-[protein] + H2O = L-tyrosyl-[protein] + phosphate. It carries out the reaction O-phospho-L-seryl-[protein] + H2O = L-seryl-[protein] + phosphate. The enzyme catalyses O-phospho-L-threonyl-[protein] + H2O = L-threonyl-[protein] + phosphate. Functionally, dual specificity phosphatase able to dephosphorylate phosphotyrosine, phosphoserine and phosphothreonine residues within the same substrate, with a preference for phosphotyrosine as a substrate. Involved in the modulation of intracellular signaling cascades. In skeletal muscle regulates systemic glucose homeostasis by activating, AMPK, an energy sensor protein kinase. Affects MAP kinase signaling though modulation of the MAPK1/2 cascade in skeletal muscle promoting muscle cell differentiation, development and atrophy. The protein is Dual specificity phosphatase 29 of Mus musculus (Mouse).